The chain runs to 475 residues: Ribulose bisphosphate carboxylase large chain (475 aa).

Residues 1 to 2 (MS) constitute a propeptide that is removed on maturation. Pro3 carries the N-acetylproline modification. Position 14 is an N6,N6,N6-trimethyllysine (Lys14). The substrate site is built by Asn123 and Thr173. Lys175 functions as the Proton acceptor in the catalytic mechanism. Lys177 contributes to the substrate binding site. Mg(2+)-binding residues include Lys201, Asp203, and Glu204. Lys201 carries the post-translational modification N6-carboxylysine. Catalysis depends on His294, which acts as the Proton acceptor. Residues Arg295, His327, and Ser379 each coordinate substrate.

This sequence belongs to the RuBisCO large chain family. Type I subfamily. Heterohexadecamer of 8 large chains and 8 small chains; disulfide-linked. The disulfide link is formed within the large subunit homodimers. The cofactor is Mg(2+). The disulfide bond which can form in the large chain dimeric partners within the hexadecamer appears to be associated with oxidative stress and protein turnover.

It localises to the plastid. The protein localises to the chloroplast. The catalysed reaction is 2 (2R)-3-phosphoglycerate + 2 H(+) = D-ribulose 1,5-bisphosphate + CO2 + H2O. It catalyses the reaction D-ribulose 1,5-bisphosphate + O2 = 2-phosphoglycolate + (2R)-3-phosphoglycerate + 2 H(+). Functionally, ruBisCO catalyzes two reactions: the carboxylation of D-ribulose 1,5-bisphosphate, the primary event in carbon dioxide fixation, as well as the oxidative fragmentation of the pentose substrate in the photorespiration process. Both reactions occur simultaneously and in competition at the same active site. This chain is Ribulose bisphosphate carboxylase large chain, found in Magnolia macrophylla (Bigleaf magnolia).